We begin with the raw amino-acid sequence, 82 residues long: Small ribosomal subunit protein bS16 (82 aa).

This sequence belongs to the bacterial ribosomal protein bS16 family.

This chain is Small ribosomal subunit protein bS16, found in Glaesserella parasuis serovar 5 (strain SH0165) (Haemophilus parasuis).